The primary structure comprises 907 residues: MESAIAEGGASRFSASSGGGGSRGAPQHYPKTAGNSEFLGKTPGQNAQKWIPARSTRRDDNSAANNSANEKERHDAIFRKVRGILNKLTPEKFDKLCLELLNVGVESKLILKGVILLIVDKALEEPKYSSLYAQLCLRLAEDAPNFDGPAAEGQPGQKQSTTFRRLLISKLQDEFENRTRNVDVYDKRENPLLPEEEEQRAIAKIKMLGNIKFIGELGKLDLIHESILHKCIKTLLEKKKRVQLQDMGEDLECLCQIMRTVGPRLDHERAKSLMDQYFARMCSLMLSKELPARIRFLLQDTVELREHHWVPRKAFLDNGPKTINQIRQDAVKDLGVFIPAPMAQGMRSDFFLEGPFMPPRMKMDRDPLGGLADMFGQMPGSGIGTGPGVIQDRFSPTMGRHRSNQLFNGHGGHIMPPTQSQFGEMGGKFMKSQGLSQLYHNQSQGLLSQLQGQSKDMPPRFSKKGQLNADEISLRPAQSFLMNKNQVPKLQPQITMIPPSAQPPRTQTPPLGQTPQLGLKTNPPLIQEKPAKTSKKPPPSKEELLKLTETVVTEYLNSGNANEAVNGVKEMRAPKHFLPEMLSKVIILSLDRSDEDKEKASSLISLLKQEGIGTSDNFMQAFLNVLDQCPKLEVDIPLVKSYLAQFAARAIISELVSISELAQPLESGTHFPLFLLCLQQLAKLQDREWLTELFQQSKVNMQKMLPEIDQNKDRMLEILEGKGLSFLFPLLKLEKELLKQIKLDPSPQTIYKWIKDNISPKLHVDKGFVNILMTSFLQYISSEVNPPSDETDSSSAPSKEQLEQEKQLLLSFKPVMQKFLHDHVDLQVSALYALQVHCYNSNFPKGMLLRFFVHFYDMEIIEEEAFLAWKEDITQEFPGKGKALFQVNQWLTWLETAEEEESEEEAD.

Residue Met-1 is modified to N-acetylmethionine. The disordered stretch occupies residues 1 to 71; it reads MESAIAEGGA…SAANNSANEK (71 aa). Phosphoserine is present on Ser-11. The region spanning 78 to 308 is the MIF4G domain; the sequence is FRKVRGILNK…QDTVELREHH (231 aa). Thr-89 is subject to Phosphothreonine. At Arg-360 the chain carries Omega-N-methylarginine. Phosphoserine is present on Ser-395. The residue at position 431 (Lys-431) is an N6-methyllysine. Ser-443 carries the phosphoserine modification. Positions 498 to 541 are disordered; that stretch reads PPSAQPPRTQTPPLGQTPQLGLKTNPPLIQEKPAKTSKKPPPSK. Residues 503–516 are compositionally biased toward polar residues; the sequence is PPRTQTPPLGQTPQ. Arg-505 carries the post-translational modification Omega-N-methylarginine. Phosphothreonine occurs at positions 508 and 514. Residues 543-666 form the MI domain; sequence ELLKLTETVV…SISELAQPLE (124 aa). Lys-575 is covalently cross-linked (Glycyl lysine isopeptide (Lys-Gly) (interchain with G-Cter in SUMO2)). The W2 domain maps to 720-904; the sequence is EGKGLSFLFP…ETAEEEESEE (185 aa). A Phosphoserine modification is found at Ser-902.

The protein belongs to the eukaryotic initiation factor 4G family. Interacts with the serine/threonine protein kinases MKNK1 and MKNK2. Binds EIF4A and EIF3. Interacts with MIF4GD. Interacts with DAZAP2. In terms of processing, phosphorylation; hyperphosphorylated during mitosis.

Functionally, appears to play a role in the switch from cap-dependent to IRES-mediated translation during mitosis, apoptosis and viral infection. Cleaved by some caspases and viral proteases. This is Eukaryotic translation initiation factor 4 gamma 2 from Oryctolagus cuniculus (Rabbit).